The chain runs to 252 residues: Electron transfer flavoprotein subunit beta (252 aa).

Belongs to the ETF beta-subunit/FixA family. Heterodimer of an alpha and a beta subunit. AMP is required as a cofactor.

Its subcellular location is the cytoplasm. Its pathway is lipid metabolism; butanoate metabolism. Functionally, part of an electron transfer flavoprotein involved in syntrophic growth of S.wolfei with butyrate. Probably receives electrons from butyryl-CoA dehydrogenases, and transfers them to the membrane-bound quinone oxidoreductase Swol_0698. This chain is Electron transfer flavoprotein subunit beta, found in Syntrophomonas wolfei subsp. wolfei (strain DSM 2245B / Goettingen).